A 524-amino-acid chain; its full sequence is MIRRAPFLILLRFCRMGKMACSGYPPFQGRIVLSEMPAHRLAALIRSKEVSALEVAESFIDNIEASDSRICAFLYTDFSYTRDVARRVDEELKSATKLSPLAGVPIAVKDMILTRDMPTTAGSKILEGWIPPYNATVIERISRARMPILGKTNQDEFGMGSSTEYSAYKTTRNPWDLSRTAGGSGGGSSAAVSASQAPLALGTDTGGSIRLPAHCTGTVGIRPTYGSVSRYGVIALASSFDQVGPCSSNILDAALLHEVIAGYDPADAVSIKDQDLNFSQAAYEGANRGISGVRLGFVNPSNWCNSKITDLFGRTLKSLESEGAVLHEVQFPNFDHAVQAYYLIMQAEASSNLSRYDSIRFGPQEMAASASGTVSKTRSIRFGPEVKRRILLGTHILSAGYYDDFYMSAQKIRSLVKRDFAKIFSLVDVLLLPTAPTPAFKLGEKIDHHTSMYKSDTATTPASLAGLPAGSIPMGVIDGLPVGLQIIAPGQFDSRVYSTGAAIEQIIGDIHAMKNTKHNTGQTA.

Residues K109 and S184 each act as charge relay system in the active site. The Acyl-ester intermediate role is filled by S208.

This sequence belongs to the amidase family. GatA subfamily. As to quaternary structure, heterotrimer of A, B and C subunits.

The catalysed reaction is L-glutamyl-tRNA(Gln) + L-glutamine + ATP + H2O = L-glutaminyl-tRNA(Gln) + L-glutamate + ADP + phosphate + H(+). Functionally, allows the formation of correctly charged Gln-tRNA(Gln) through the transamidation of misacylated Glu-tRNA(Gln) in organisms which lack glutaminyl-tRNA synthetase. The reaction takes place in the presence of glutamine and ATP through an activated gamma-phospho-Glu-tRNA(Gln). In Tropheryma whipplei (strain TW08/27) (Whipple's bacillus), this protein is Glutamyl-tRNA(Gln) amidotransferase subunit A.